A 454-amino-acid chain; its full sequence is OTU domain-containing protein 1 (454 aa).

Disordered stretches follow at residues 36–64 (QSASPAAAAPEPDTGERPPAAATEPREAA) and 116–257 (LPPP…SRAD). A compositionally biased stretch (low complexity) spans 52–64 (RPPAAATEPREAA). The span at 116–125 (LPPPSAPSPP) shows a compositional bias: pro residues. 3 stretches are compositionally biased toward basic and acidic residues: residues 151 to 164 (DAPDRNFRLSEHRQ), 193 to 210 (GEERRAERSSRGWDRASG), and 219 to 229 (ALRRQDPEAEA). An OTU domain is found at 282 to 411 (KYRFHIIPDG…NGHYDAVFDH (130 aa)). Residues 287 to 293 (IIPDGNC) are cys-loop. Residue D290 is part of the active site. C293 (nucleophile) is an active-site residue. Residues 342-352 (AAQDGAWAGYP) form a his-loop region. Residues 399 to 404 (WLSNGH) form a variable-loop region. H404 is an active-site residue. Residues 430–449 (KRDEELAKSMAISLSKMYIE) enclose the UIM domain.

The enzyme catalyses Thiol-dependent hydrolysis of ester, thioester, amide, peptide and isopeptide bonds formed by the C-terminal Gly of ubiquitin (a 76-residue protein attached to proteins as an intracellular targeting signal).. Deubiquitinating enzyme that specifically hydrolyzes 'Lys-63'-linked polyubiquitin to monoubiquitin. Required for the stability and translation of a subset mRNAs with a high abundance of rare codons by mediating deubiquitination of 40S ribosomal protein RPS10/eS10, thereby antagonizing ZNF598-mediated 40S ubiquitination. The abundance of rare codons in mRNAs can limit the translation rate and can lead to ribosome collisions that trigger activation of ribosome quality control (RQC) pathway by ZNF598. OTUD1-mediated deubiquitination prevents activation of the RQC and subsequent dissociation of ribosomes and stimulates formation of polysomes and translation. This is OTU domain-containing protein 1 (Otud1) from Mus musculus (Mouse).